Here is a 275-residue protein sequence, read N- to C-terminus: Large ribosomal subunit protein uL2c (275 aa).

Positions Lys225–Thr259 are disordered.

Belongs to the universal ribosomal protein uL2 family. In terms of assembly, part of the 50S ribosomal subunit.

Its subcellular location is the plastid. The protein localises to the cyanelle. In Cyanophora paradoxa, this protein is Large ribosomal subunit protein uL2c (rpl2).